An 84-amino-acid chain; its full sequence is Sec-independent protein translocase protein TatA (84 aa).

The chain crosses the membrane as a helical span at residues 1-21 (MPNLGVPELLIIALVIFLLFG). Over residues 42 to 57 (EMDEMKTDGDKKELAE) the composition is skewed to basic and acidic residues. Residues 42–84 (EMDEMKTDGDKKELAEKQAPTAEQQQAQDLAQPKSEQPNEHNA) are disordered. The span at 62–77 (TAEQQQAQDLAQPKSE) shows a compositional bias: polar residues.

It belongs to the TatA/E family. In terms of assembly, the Tat system comprises two distinct complexes: a TatABC complex, containing multiple copies of TatA, TatB and TatC subunits, and a separate TatA complex, containing only TatA subunits. Substrates initially bind to the TatABC complex, which probably triggers association of the separate TatA complex to form the active translocon.

It is found in the cell membrane. In terms of biological role, part of the twin-arginine translocation (Tat) system that transports large folded proteins containing a characteristic twin-arginine motif in their signal peptide across membranes. TatA could form the protein-conducting channel of the Tat system. This is Sec-independent protein translocase protein TatA from Corynebacterium jeikeium (strain K411).